The sequence spans 310 residues: MLSVPKSYTNGKMDQVVFQKQRNRLNQCFFKFKNQTKYIQFRLSEEQYNKLKISGETYGLSPNLYAKKLAQKSHLKKPYLEHDQAKSLLLELSKQGSQFKSASFRKLLDEHQLLASYSKPGYPYDNAVTEVFFKYLKQREINRRTYHSIQEVQLSCFEYIEQFYNNYNPHSANNGLTPNQKEENYFKKNIAHLTETDIVDRLLKGSPALRVGYQLYQDFLYAVKERDYVSFEELLTNNIMLPEGYQTILRTFQKFLPQIKNALQQSYSNGPLECLNNHIKVLKRNAYGFRSFYNFKLRIMIRHGNALIFN.

One can recognise an Integrase catalytic domain in the interval 24 to 186 (RLNQCFFKFK…TPNQKEENYF (163 aa)).

In Lactococcus lactis subsp. lactis (Streptococcus lactis), this protein is ATP-dependent protease.